Consider the following 555-residue polypeptide: Potassium-transporting ATPase potassium-binding subunit (555 aa).

10 helical membrane-spanning segments follow: residues Ile-2 to Val-22, Gln-60 to Phe-80, Ile-130 to Phe-150, Val-173 to Thr-193, Met-246 to Tyr-266, Ile-278 to Glu-298, Ala-374 to Val-394, Leu-412 to Leu-432, Leu-483 to Leu-503, and Gly-525 to Leu-545.

The protein belongs to the KdpA family. In terms of assembly, the system is composed of three essential subunits: KdpA, KdpB and KdpC.

The protein localises to the cell membrane. In terms of biological role, part of the high-affinity ATP-driven potassium transport (or Kdp) system, which catalyzes the hydrolysis of ATP coupled with the electrogenic transport of potassium into the cytoplasm. This subunit binds the extracellular potassium ions and delivers the ions to the membrane domain of KdpB through an intramembrane tunnel. This Bacillus cereus (strain B4264) protein is Potassium-transporting ATPase potassium-binding subunit.